Here is a 447-residue protein sequence, read N- to C-terminus: Dimethylsulfoniopropionate lyase DddP (447 aa).

The interval 1-26 is disordered; the sequence is MNRHFNATRKIDPSRGATLGDGSPND. Residues aspartate 295, aspartate 297, aspartate 307, histidine 371, glutamate 406, and glutamate 421 each contribute to the a divalent metal cation site.

This sequence belongs to the peptidase M24B family. In terms of assembly, homodimer. Requires a divalent metal cation as cofactor.

The enzyme catalyses S,S-dimethyl-beta-propiothetin = acrylate + dimethyl sulfide + H(+). Able to cleave dimethylsulfoniopropionate (DMSP), releasing dimethyl sulfide (DMS). DMS is the principal form by which sulfur is transported from oceans to the atmosphere. The real activity of the protein is however subject to debate and it is unclear whether it constitutes a real dimethylsulfoniopropionate lyase in vivo: the low activity with DMSP as substrate suggests that DMSP is not its native substrate. This is Dimethylsulfoniopropionate lyase DddP from Roseobacter denitrificans (strain ATCC 33942 / OCh 114) (Erythrobacter sp. (strain OCh 114)).